Consider the following 1089-residue polypeptide: Electroneutral sodium bicarbonate exchanger 1 (1089 aa).

Residues 1 to 476 (MPAGSNEPDG…DYRDALSLQC (476 aa)) are Extracellular-facing. The tract at residues 55–90 (LGRQSHRHHRTHGQKHRRRGGRGKGASQGEEGLEAL) is disordered. Basic residues predominate over residues 58 to 76 (QSHRHHRTHGQKHRRRGGR). The helical transmembrane segment at 477-497 (LASFLFLYCACMSPVITFGGL) threads the bilayer. The Cytoplasmic portion of the chain corresponds to 498 to 505 (LGEATEGR). The helical transmembrane segment at 506–526 (ISAIESLFGASMTGIAYSLFA) threads the bilayer. The Extracellular portion of the chain corresponds to 527-563 (GQPLTILGSTGPVLVFEKILFKFCKDYALSYLSLRAL). Residues 564–584 (IGLWTAFLCIVLVATDASSLV) traverse the membrane as a helical segment. The Cytoplasmic segment spans residues 585–593 (CYITRFTEE). A helical transmembrane segment spans residues 594 to 614 (AFASLICIIFIYEAIEKLIHL). Topologically, residues 615-685 (AETYPIHMHS…EFMGSACGHH (71 aa)) are extracellular. 2 cysteine pairs are disulfide-bonded: Cys634-Cys682 and Cys636-Cys670. Asn644 carries an N-linked (GlcNAc) asparagine glycan. A helical transmembrane segment spans residues 686–706 (GPYTPDVLFWSCILFFATFIV). Over 707 to 729 (SSTLKTFKTSRYFPTRVRSMVSD) the chain is Cytoplasmic. Residues 730 to 750 (FAVFLTIFTMVVLDFLIGVPS) form a helical membrane-spanning segment. Over 751–776 (PKLQVPNVFKPTRDDRGWFINPIGPN) the chain is Extracellular. The chain crosses the membrane as a helical span at residues 777 to 797 (PWWTVIAAIIPALLCTILIFM). Topologically, residues 798–822 (DQQITAVIINRKEHKLKKGCGYHLD) are cytoplasmic. The helical transmembrane segment at 823–843 (LLMVAVMLGVCSIMGLPWFVA) threads the bilayer. At 844-879 (ATVLSITHVNSLKLESECSAPGEQPKFLGIREQRVT) the chain is on the extracellular side. The helical transmembrane segment at 880–900 (GLMIFVLMGCSVFMTAVLKFI) threads the bilayer. Residues 901–902 (PM) are Cytoplasmic-facing. The chain crosses the membrane as a helical span at residues 903–923 (PVLYGVFLYMGVSSLQGIQFF). The Extracellular segment spans residues 924–960 (DRLKLFGMPAKHQPDFIYLRHVPLRKVHLFTLVQLTC). Residues 961-981 (LVLLWVIKASPAAIVFPMMVL) traverse the membrane as a helical segment. At 982 to 1089 (ALVFVRKVMD…GNTKEKSPFN (108 aa)) the chain is on the cytoplasmic side.

This sequence belongs to the anion exchanger (TC 2.A.31) family. As to quaternary structure, homodimer. Expressed in the hippocampal neurons (at protein level). Highly expressed in brain with lower levels in lung, kidney and heart. In the kidney, there is high expression in the inner medulla, localized to the inner medullary collecting duct. In the brain, there seems to be three transcripts each having a different expression pattern. The smaller 3kb transcript has highest expression levels in the thalamus and the largest 9.5kb transcript has highest levels in the substantia nigra. The middle transcript of 4.4kb, which is also the main transcript in kidney, is highly expressed in thalamus. Hence, the highest levels are observed in the thalamus, amygdala and caudate nucleus and very low expression was seen in the corpus callosum.

It localises to the cell membrane. The protein resides in the apical cell membrane. It is found in the basolateral cell membrane. The protein localises to the cytoplasmic vesicle. Its subcellular location is the secretory vesicle. It localises to the synaptic vesicle membrane. It catalyses the reaction 2 hydrogencarbonate(out) + chloride(in) + Na(+)(out) = 2 hydrogencarbonate(in) + chloride(out) + Na(+)(in). Mediates electroneutral sodium- and carbonate-dependent chloride-HCO3(-) exchange with a Na(+):HCO3(-) stoichiometry of 2:1. Plays a major role in pH regulation in neurons. Mediates sodium reabsorption in the renal cortical collecting ducts. The chain is Electroneutral sodium bicarbonate exchanger 1 from Mus musculus (Mouse).